A 117-amino-acid polypeptide reads, in one-letter code: UPF0375 protein Y45F10C.2 (117 aa).

The N-terminal stretch at 1–20 is a signal peptide; that stretch reads MNSFVSTVLLLSVTIALVSG.

It belongs to the UPF0375 family. Expressed in the uterine epithelium.

It localises to the secreted. Negatively regulates the egg-laying rate by promoting retention of fertilized eggs. This chain is UPF0375 protein Y45F10C.2, found in Caenorhabditis elegans.